The following is a 45-amino-acid chain: Large ribosomal subunit protein bL34 (45 aa).

It belongs to the bacterial ribosomal protein bL34 family.

In Streptomyces bikiniensis, this protein is Large ribosomal subunit protein bL34 (rpmH).